The following is a 769-amino-acid chain: Neprilysin-21 (769 aa).

Over 1-26 (MKPENGAATWHPAKRSCLGRLTTLET) the chain is Cytoplasmic. Residues 27–47 (LLLVFLGLLITALLSVLFLWL) form a helical; Signal-anchor for type II membrane protein membrane-spanning segment. The Extracellular segment spans residues 48–769 (WVLDGYKTFT…MNPERKCQVW (722 aa)). N-linked (GlcNAc...) asparagine glycosylation is present at asparagine 69. In terms of domain architecture, Peptidase M13 spans 85-769 (VCTSRECVRL…MNPERKCQVW (685 aa)). 5 cysteine pairs are disulfide-bonded: cysteine 86–cysteine 91, cysteine 109–cysteine 754, cysteine 117–cysteine 714, cysteine 173–cysteine 428, and cysteine 638–cysteine 766. Asparagine 221, asparagine 240, asparagine 272, asparagine 307, asparagine 356, asparagine 412, and asparagine 506 each carry an N-linked (GlcNAc...) asparagine glycan. Histidine 601 serves as a coordination point for Zn(2+). Glutamate 602 is an active-site residue. Zn(2+) contacts are provided by histidine 605 and glutamate 663. The active-site Proton donor is aspartate 667. Residues asparagine 684 and asparagine 698 are each glycosylated (N-linked (GlcNAc...) asparagine).

Belongs to the peptidase M13 family. Zn(2+) is required as a cofactor.

The protein resides in the cell membrane. Probable cell surface protease. The chain is Neprilysin-21 (nep-21) from Caenorhabditis elegans.